The sequence spans 184 residues: GTP cyclohydrolase 1 (184 aa).

The Zn(2+) site is built by Cys75, His78, and Cys146.

Belongs to the GTP cyclohydrolase I family. As to quaternary structure, toroid-shaped homodecamer, composed of two pentamers of five dimers.

It carries out the reaction GTP + H2O = 7,8-dihydroneopterin 3'-triphosphate + formate + H(+). It functions in the pathway cofactor biosynthesis; 7,8-dihydroneopterin triphosphate biosynthesis; 7,8-dihydroneopterin triphosphate from GTP: step 1/1. The sequence is that of GTP cyclohydrolase 1 from Streptococcus sanguinis (strain SK36).